Consider the following 238-residue polypeptide: Small ribosomal subunit protein uS2 (238 aa).

It belongs to the universal ribosomal protein uS2 family.

This is Small ribosomal subunit protein uS2 from Actinobacillus pleuropneumoniae serotype 7 (strain AP76).